A 539-amino-acid polypeptide reads, in one-letter code: Probable K(+)/H(+) antiporter subunit D (539 aa).

Transmembrane regions (helical) follow at residues 4 to 23 (WLDH…AAVL), 36 to 58 (AIGF…LAAA), 78 to 100 (FGIV…GLAL), 113 to 135 (AGHH…FLTG), 140 to 162 (LFVF…SGPL), 175 to 197 (LAAS…TLNM), 217 to 239 (MGSA…SFWL), 251 to 273 (AGVF…LLVF), 283 to 305 (FGQE…GVLA), 312 to 331 (LAGY…VGLG), 335 to 357 (MLAG…FLLI), 400 to 422 (VLGL…SGFI), 442 to 464 (AMSA…AMIA), and 484 to 506 (VVVI…SLQA).

This sequence belongs to the CPA3 antiporters (TC 2.A.63) subunit D family. As to quaternary structure, may form a hetero-oligomeric complex that consists of six subunits: PhaAB, PhaC, PhaD, PhaE, PhaF and PhaG.

The protein localises to the cell membrane. Its function is as follows. Part of a K(+) efflux system which is required for the adaptation of R.meliloti to alkaline pH as well as for the infection process during symbiotic nodule development. This chain is Probable K(+)/H(+) antiporter subunit D (phaD), found in Rhizobium meliloti (strain 1021) (Ensifer meliloti).